The chain runs to 591 residues: MKKISLPKIGIRPVIDGRRMGVRESLEEQTMNMAKATAALITEKIRHACGAQVECVIADTCIAGMAESAACEEKFSSQNVGVTITVTPCWCYGSETIDMDPMRPKAIWGFNGTERPGAVYLAAALAAHSQKGIPAFSIYGHDVQDADDTSIPADVEEKLLRFARAGLAVASMKGKSYLSVGGVSMGIAGSIVDHNFFESWLGMKVQAVDMTELRRRIDQKIYDEAELEMALAWADKNFRYGEDQNASQYKRNEAQNRAVLKESLLMAMCIRDMMQGNKTLADKGLVEESLGYNAIAAGFQGQRHWTDQYPNGDTAEALLNSSFDWNGVREPFVVATENDSLNGVAMLFGHQLTGTAQIFADVRTYWSPEAVERVTGQALSGLAEHGIIHLINSGSAALDGACKQRDSEGKPTMKPHWEISQQEADACLAATEWCPAIHEYFRGGGYSSRFLTEGGVPFTMTRVNIIKGLGPVLQIAEGWSVELPKAMHDQLDARTNSTWPTTWFAPRLTGKGPFTDVYSVMANWGANHGVLTIGHVGADFITLAAMLRIPVCMHNVEEAKIYRPSAWAAHGMDIEGQDYRACQNYGPLYKR.

Catalysis depends on proton acceptor residues glutamate 337 and aspartate 361. Mn(2+)-binding residues include glutamate 337, aspartate 361, and histidine 528.

The protein belongs to the L-fucose isomerase family. As to quaternary structure, homohexamer. It depends on Mn(2+) as a cofactor.

It localises to the cytoplasm. It carries out the reaction L-fucose = L-fuculose. It functions in the pathway carbohydrate degradation; L-fucose degradation; L-lactaldehyde and glycerone phosphate from L-fucose: step 1/3. Its function is as follows. Converts the aldose L-fucose into the corresponding ketose L-fuculose. The protein is L-fucose isomerase of Salmonella paratyphi A (strain ATCC 9150 / SARB42).